The chain runs to 253 residues: MRILLTNDDGINAPGLSVLEEIAKEISDDIWIAAPEEEQSGKGRAISLTHPVRVRKVGAKAWAVSGTPSDAVLLATRDLMPDMPDLVLSGVNRGQNIAEDTSFSGTIAAAMFGMQLGVPSIALSQAQNFRERGSLSWETSKAWGAKAIRPLLEMRWPKDVVMNVNFPDVEPGDVRGIQITRQGFRDEAIIHTDRREDLRGNDYYWIGYRGKLSKPDEGTDIRAIYDGYVSISPLHVDLTHEPFLKTLKESWQS.

The a divalent metal cation site is built by Asp8, Asp9, Ser40, and Asn92.

This sequence belongs to the SurE nucleotidase family. The cofactor is a divalent metal cation.

It is found in the cytoplasm. It catalyses the reaction a ribonucleoside 5'-phosphate + H2O = a ribonucleoside + phosphate. In terms of biological role, nucleotidase that shows phosphatase activity on nucleoside 5'-monophosphates. This Hyphomonas neptunium (strain ATCC 15444) protein is 5'-nucleotidase SurE.